The following is a 288-amino-acid chain: Dysbindin protein homolog (288 aa).

Residues 147–239 (AQLQNSSQVL…QRERQAVFDD (93 aa)) are a coiled coil.

This sequence belongs to the dysbindin family. In terms of assembly, component of the biogenesis of lysosome-related organelles complex-1 (BLOC-1) composed of Blos1, Blos2, Blos3, Blos4, Dysb, Muted, Pldn and Snapin. Interacts with Pldn and Snapin.

In terms of biological role, component of the biogenesis of lysosome-related organelles complex-1 (BLOC-1) involved in pigment granule biogenesis and membrane trafficking in synapses. In response to high synaptic activity at neuromuscular junctions, stabilizes Pldn protein levels and, together with Pldn, plays a role in promoting efficient synaptic vesicle recycling and re-formation through early endosomes. In Drosophila melanogaster (Fruit fly), this protein is Dysbindin protein homolog.